Reading from the N-terminus, the 839-residue chain is MATIRHIMDWLRPTFTPLAGVKSRQECIAHYGDDWALMITQSRMTLSAEAQVNAWYEGGAEVNGSIPSVEGNAAAPQAAAVVAEPPHPSPAENEGEDASWVAALPAPPTYEVVQGRAPTLEEIHGASRLQIVPYTGRARVIGEDEVLPSPVLSSIWRATRCPGRILRVLGTLLKPGACQRHLEDLREVQPQVCVGNPCEVKLQEEGAPMAYMNAQSIAMELRAMFGWQAATPANRELGNRVARDILRDGCGATREQIWYMSSLALHMWFQPTLCDLAIKAGAQNFLVGEVYARSGVETKTRPKILSPQIKVKLAARPRPVKRVSYNVDVLGPSADYGVHNNSLNNLVRGVNERVFYTNNQGKLPLAPAAGAYQQIDCAALKQFRVTPWSLDDVWMSYKGSQRVRYKQAVDSLGMRPLSKSDARVSTFIKAEKVNFRAKPDPAPRVIQPRDPRFNAVFAKYIKPLEPLLYKALGKLYKYPCVAKGFNAVETGEIVAKKWKMFANPVCVGLDASRFDQHVSVDALRFTHGVYRRFVKSSEFDKLLRWMYTNRCRGAAKDGFVKYTVNGCRMSGDMDTALGNCVLMVLMTRHLLMSLGIPHELLDNGDDCIVIMDQEHLAKFNDAVKPYYSNLGFTMKVEEPVYSLERVDFCQTRPVYDGKKWRMVRHITSVAKDCCTVINWEQLPSWLSAIGECGIAVAGGIPVHNSFLRYLMRVGGTKGGIENHLLWKNEGLSWYRMGMDLSHEKVVSDEARLSFQTAFGISPTMQRALEDLYDGLGAPTVNGCDYRTVKTRDCREIECMPPRHYNHYFIDCGMQPAGSQEQYVNPGYTIFEAAALWAQC.

Residues Pro-504–Phe-619 form the RdRp catalytic domain.

It catalyses the reaction RNA(n) + a ribonucleoside 5'-triphosphate = RNA(n+1) + diphosphate. Its function is as follows. RNA-dependent RNA polymerase replicates the viral genome. In Groundnut rosette virus (strain MC1) (GRV), this protein is RNA-directed RNA polymerase.